The following is a 148-amino-acid chain: Transcriptional repressor NrdR (148 aa).

The segment at 1–22 is disordered; sequence MKCPYCSAPDSKVVNSRPSDDG. A zinc finger lies at 3–34; sequence CPYCSAPDSKVVNSRPSDDGASIRRRRECLNC. The ATP-cone domain occupies 49–136; the sequence is LMVVKRSGPR…VYRDFDSLER (88 aa).

It belongs to the NrdR family. The cofactor is Zn(2+).

Its function is as follows. Negatively regulates transcription of bacterial ribonucleotide reductase nrd genes and operons by binding to NrdR-boxes. This is Transcriptional repressor NrdR from Deinococcus deserti (strain DSM 17065 / CIP 109153 / LMG 22923 / VCD115).